The chain runs to 539 residues: CTP synthase (539 aa).

The amidoligase domain stretch occupies residues 1-268; it reads MSFKSIFLTG…SDFLLNKLGF (268 aa). Ser14 is a binding site for CTP. Position 14 (Ser14) interacts with UTP. ATP is bound at residue 15–20; the sequence is SLGKGL. Tyr55 serves as a coordination point for L-glutamine. Asp72 contributes to the ATP binding site. 2 residues coordinate Mg(2+): Asp72 and Glu142. CTP-binding positions include 149-151, 188-193, and Lys224; these read DIE and KTKPTQ. UTP is bound by residues 188 to 193 and Lys224; that span reads KTKPTQ. The Glutamine amidotransferase type-1 domain maps to 294–532; the sequence is RIGLVGKYLE…IRAAKAYSLE (239 aa). Residue Gly353 coordinates L-glutamine. The active-site Nucleophile; for glutamine hydrolysis is Cys380. L-glutamine contacts are provided by residues 381–384, Glu404, and Arg460; that span reads LGMQ. Catalysis depends on residues His505 and Glu507.

This sequence belongs to the CTP synthase family. In terms of assembly, homotetramer.

The enzyme catalyses UTP + L-glutamine + ATP + H2O = CTP + L-glutamate + ADP + phosphate + 2 H(+). It catalyses the reaction L-glutamine + H2O = L-glutamate + NH4(+). It carries out the reaction UTP + NH4(+) + ATP = CTP + ADP + phosphate + 2 H(+). Its pathway is pyrimidine metabolism; CTP biosynthesis via de novo pathway; CTP from UDP: step 2/2. Allosterically activated by GTP, when glutamine is the substrate; GTP has no effect on the reaction when ammonia is the substrate. The allosteric effector GTP functions by stabilizing the protein conformation that binds the tetrahedral intermediate(s) formed during glutamine hydrolysis. Inhibited by the product CTP, via allosteric rather than competitive inhibition. Its function is as follows. Catalyzes the ATP-dependent amination of UTP to CTP with either L-glutamine or ammonia as the source of nitrogen. Regulates intracellular CTP levels through interactions with the four ribonucleotide triphosphates. This Chlamydia trachomatis serovar A (strain ATCC VR-571B / DSM 19440 / HAR-13) protein is CTP synthase.